A 132-amino-acid chain; its full sequence is Small ribosomal subunit protein uS11 (132 aa).

This sequence belongs to the universal ribosomal protein uS11 family. In terms of assembly, part of the 30S ribosomal subunit. Interacts with proteins S7 and S18. Binds to IF-3.

In terms of biological role, located on the platform of the 30S subunit, it bridges several disparate RNA helices of the 16S rRNA. Forms part of the Shine-Dalgarno cleft in the 70S ribosome. This is Small ribosomal subunit protein uS11 from Chlamydia trachomatis serovar A (strain ATCC VR-571B / DSM 19440 / HAR-13).